The sequence spans 864 residues: Leucine--tRNA ligase (864 aa).

The 'HIGH' region signature appears at 42 to 52 (PYPSGKLHMGH). The 'KMSKS' region motif lies at 624 to 628 (KMSKS). Lys627 serves as a coordination point for ATP.

This sequence belongs to the class-I aminoacyl-tRNA synthetase family.

The protein localises to the cytoplasm. The enzyme catalyses tRNA(Leu) + L-leucine + ATP = L-leucyl-tRNA(Leu) + AMP + diphosphate. The polypeptide is Leucine--tRNA ligase (Burkholderia ambifaria (strain ATCC BAA-244 / DSM 16087 / CCUG 44356 / LMG 19182 / AMMD) (Burkholderia cepacia (strain AMMD))).